A 511-amino-acid polypeptide reads, in one-letter code: Probable G-protein coupled receptor 101 (511 aa).

Over 1 to 35 (MPPSCTNSTQENNGSRVCLPLSKMPISVAHGIIRS) the chain is Extracellular. N-linked (GlcNAc...) asparagine glycosylation is found at N7 and N13. A helical transmembrane segment spans residues 36–56 (VVLLVILGVAFLGNVVLGYVL). Over 57–67 (HRKPNLLQVTN) the chain is Cytoplasmic. The helical transmembrane segment at 68–90 (RFIFNLLVTDLLQVALVAPWVVS) threads the bilayer. Residues 91–106 (TAIPFFWPLNIHFCTA) lie on the Extracellular side of the membrane. A disulfide bridge links C104 with C182. Residues 107–127 (LVSLTHLFAFASVNTIVVVSV) traverse the membrane as a helical segment. The Cytoplasmic portion of the chain corresponds to 128 to 149 (DRYLTIIHPLSYPSKMTNRRSY). The chain crosses the membrane as a helical span at residues 150 to 170 (ILLYGTWIAAFLQSTPPLYGW). Residues 171-196 (GHATFDDRNAFCSMIWGASPAYTVVS) are Extracellular-facing. The helical transmembrane segment at 197–217 (VVSFLVIPLGVMIACYSVVFG) threads the bilayer. Topologically, residues 218–398 (AARRQQALLY…PPCYECKAAR (181 aa)) are cytoplasmic. Positions 240–261 (DSVVHENEEGAKKRDEFQDKNE) are enriched in basic and acidic residues. 2 disordered regions span residues 240–315 (DSVV…EVSN) and 367–386 (EAMRIPESSPPSRRNSTSDP). A compositionally biased stretch (polar residues) spans 376–385 (PPSRRNSTSD). A helical membrane pass occupies residues 399–419 (VIFVIISTYVLSLGPYCFLAV). The Extracellular portion of the chain corresponds to 420-432 (LAVWVDIDTRVPQ). A helical membrane pass occupies residues 433–453 (WVITIIIWLFFLQCCIHPYVY). Over 454–511 (GYMHKSIKKEIQEVLKKLICKKSPPVEDSHPDLHETEAGTEGGIEGKAVPSHDSATSP) the chain is Cytoplasmic. The disordered stretch occupies residues 476 to 511 (SPPVEDSHPDLHETEAGTEGGIEGKAVPSHDSATSP). Residues 477–490 (PPVEDSHPDLHETE) show a composition bias toward basic and acidic residues.

It belongs to the G-protein coupled receptor 1 family. As to expression, expressed in the brain in hypothalamus.

The protein resides in the cell membrane. Functionally, orphan receptor. The chain is Probable G-protein coupled receptor 101 (Gpr101) from Mus musculus (Mouse).